A 261-amino-acid chain; its full sequence is MKKPVVLRGQNLSLQFASRQVLKQIDVAFCAGEVVALLGPNGAGKSSLLKLLSGEITSSQSIEYFGKAAKSWRSAALSRHLGLLPQSSSLTFPFLAREVVELGAIPLALSQAEVKTIAEKYMAITDVVHLADSLYPALSGGEKQRLHFARVLTQLDQSGDKKILMLDEPTSALDLAHQHNTLRVAKQFAKEQNACVIVVLHDLNLAAQYADRMVILHRGEIVVDACPEEALTPEIIDAVYGYKAMIGRHPTLGFPLVQPAA.

The ABC transporter domain maps to 7–243 (LRGQNLSLQF…EIIDAVYGYK (237 aa)). 39–46 (GPNGAGKS) is a binding site for ATP.

This sequence belongs to the ABC transporter superfamily. Heme (hemin) importer (TC 3.A.1.14.5) family. As to quaternary structure, the complex is composed of two ATP-binding proteins (HmuV), two transmembrane proteins (HmuU) and a solute-binding protein (HmuT).

It is found in the cell inner membrane. Its function is as follows. Part of the ABC transporter complex HmuTUV involved in hemin import. Responsible for energy coupling to the transport system. This is Hemin import ATP-binding protein HmuV from Vibrio vulnificus (strain CMCP6).